The chain runs to 191 residues: Protein phosphatase inhibitor 2 (191 aa).

Residues 20–31 are compositionally biased toward basic and acidic residues; sequence ESNKPVRQKITE. 2 disordered regions span residues 20 to 52 and 67 to 191; these read ESNKPVRQKITEPKTPYHPMMDDDGSLSPRGRA and RNVL…PELI. Residues Ser45 and Ser47 each carry the phosphoserine modification. Residues 93–109 show a composition bias toward acidic residues; the sequence is SDEEEEEADPMDQDEEG. Positions 114–136 are enriched in basic and acidic residues; that stretch reads KNERFNAHRKAHYDEFRKVKELR.

In terms of assembly, interacts with protein phosphatase 1. Interacts with TOPP1, SRK2D/SNRK2.2, SRK2I/SNRK2.3, SRK2E/SNRK2.6, SRK2C/SNRK2.8 and PYL11. Post-translationally, phosphorylated in vivo. Expressed in roots, cotyledons, leaves, flowers and siliques.

The protein resides in the nucleus. Its subcellular location is the cytoplasm. Functionally, inhibitor of protein-phosphatase 1 (PP1). Binds to and inhibits PP1 activity. Acts as negative regulator of abscisic acid (ABA) signaling. Enhances the inhibition of SRK2E/SNRK2.6 by TOPP1. May promote the interaction between TOPP1 and the ABA receptor PYL11. In Arabidopsis thaliana (Mouse-ear cress), this protein is Protein phosphatase inhibitor 2.